A 291-amino-acid chain; its full sequence is NAD kinase (291 aa).

Asp73 (proton acceptor) is an active-site residue. Residues 73–74, 147–148, Arg175, Asp177, 188–193, Ala212, and Gln246 contribute to the NAD(+) site; these read DG, ND, and TAYALS.

It belongs to the NAD kinase family. A divalent metal cation serves as cofactor.

The protein localises to the cytoplasm. It catalyses the reaction NAD(+) + ATP = ADP + NADP(+) + H(+). Functionally, involved in the regulation of the intracellular balance of NAD and NADP, and is a key enzyme in the biosynthesis of NADP. Catalyzes specifically the phosphorylation on 2'-hydroxyl of the adenosine moiety of NAD to yield NADP. This chain is NAD kinase, found in Polaromonas naphthalenivorans (strain CJ2).